Consider the following 298-residue polypeptide: Protoheme IX farnesyltransferase (298 aa).

8 helical membrane passes run 26 to 46 (IVIL…GGPP), 48 to 68 (LGLT…ANAI), 110 to 130 (FLVL…GLLF), 147 to 167 (IVIG…AVTG), 174 to 194 (VIMF…LALF), 220 to 240 (ILLY…TGTV), 243 to 263 (LYLW…VGLL), and 276 to 296 (TYGW…LDVT).

The protein belongs to the UbiA prenyltransferase family. Protoheme IX farnesyltransferase subfamily. Interacts with CtaA.

It localises to the cell membrane. It carries out the reaction heme b + (2E,6E)-farnesyl diphosphate + H2O = Fe(II)-heme o + diphosphate. It participates in porphyrin-containing compound metabolism; heme O biosynthesis; heme O from protoheme: step 1/1. Converts heme B (protoheme IX) to heme O by substitution of the vinyl group on carbon 2 of heme B porphyrin ring with a hydroxyethyl farnesyl side group. This Symbiobacterium thermophilum (strain DSM 24528 / JCM 14929 / IAM 14863 / T) protein is Protoheme IX farnesyltransferase.